The following is a 353-amino-acid chain: Rhodopsin (353 aa).

Topologically, residues 1-36 (MNGTEGDNFYVPFSNKTGLARSPYEYPQYYLAEPWK) are extracellular. N-linked (GlcNAc...) asparagine glycans are attached at residues Asn2 and Asn15. A helical membrane pass occupies residues 37–61 (YSALAAYMFFLILVGFPVNFLTLFV). Topologically, residues 62–73 (TVQHKKLRTPLN) are cytoplasmic. The chain crosses the membrane as a helical span at residues 74 to 96 (YILLNLAMANLFMVLFGFTVTMY). Topologically, residues 97–110 (TSMNGYFVFGPTMC) are extracellular. Residues Cys110 and Cys187 are joined by a disulfide bond. Residues 111–133 (SIEGFFATLGGEVALWSLVVLAI) form a helical membrane-spanning segment. Positions 134-136 (ERY) match the 'Ionic lock' involved in activated form stabilization motif. The Cytoplasmic portion of the chain corresponds to 134–152 (ERYIVICKPMGNFRFGNTH). Residues 153-173 (AIMGVAFTWIMALACAAPPLV) traverse the membrane as a helical segment. Over 174-202 (GWSRYIPEGMQCSCGPDYYTLNPNFNNES) the chain is Extracellular. The chain crosses the membrane as a helical span at residues 203-224 (YVVYMFVVHFLVPFVIIFFCYG). The Cytoplasmic segment spans residues 225-252 (RLLCTVKEAAAAQQESASTQKAEKEVTR). Residues 253–274 (MVVLMVIGFLVCWVPYASVAFY) traverse the membrane as a helical segment. The Extracellular portion of the chain corresponds to 275–286 (IFTHQGSDFGAT). A helical transmembrane segment spans residues 287-308 (FMTLPAFFAKSSALYNPVIYIL). An N6-(retinylidene)lysine modification is found at Lys296. The Cytoplasmic portion of the chain corresponds to 309–353 (MNKQFRNCMITTLCCGKNPLGDDESGASTSKTEVSSVSTSPVSPA). The interval 330–353 (DDESGASTSKTEVSSVSTSPVSPA) is disordered. Over residues 336–353 (STSKTEVSSVSTSPVSPA) the composition is skewed to low complexity.

The protein belongs to the G-protein coupled receptor 1 family. Opsin subfamily. Post-translationally, phosphorylated on some or all of the serine and threonine residues present in the C-terminal region. Contains one covalently linked retinal chromophore. In terms of tissue distribution, short photoreceptor cells.

It is found in the membrane. Its subcellular location is the cell projection. It localises to the cilium. The protein localises to the photoreceptor outer segment. In terms of biological role, photoreceptor required for image-forming vision at low light intensity. While most salt water fish species use retinal as chromophore, most freshwater fish use 3-dehydroretinal, or a mixture of retinal and 3-dehydroretinal. Light-induced isomerization of 11-cis to all-trans retinal triggers a conformational change that activates signaling via G-proteins. Subsequent receptor phosphorylation mediates displacement of the bound G-protein alpha subunit by arrestin and terminates signaling. In Lethenteron camtschaticum (Japanese lamprey), this protein is Rhodopsin (RHO).